A 428-amino-acid chain; its full sequence is Adenylosuccinate synthetase (428 aa).

GTP contacts are provided by residues 12–18 and 40–42; these read GDEGKGK and GHT. Asp-13 serves as the catalytic Proton acceptor. Mg(2+) is bound by residues Asp-13 and Gly-40. Residues 13–16, 38–41, Thr-128, Arg-142, Gln-223, Thr-238, and Arg-302 each bind IMP; these read DEGK and NAGH. His-41 acts as the Proton donor in catalysis. 298 to 304 contributes to the substrate binding site; the sequence is VTTGRPR. Residues Arg-304, 330 to 332, and 412 to 414 each bind GTP; these read KLD and GTG.

This sequence belongs to the adenylosuccinate synthetase family. As to quaternary structure, homodimer. Mg(2+) is required as a cofactor.

The protein resides in the cytoplasm. It catalyses the reaction IMP + L-aspartate + GTP = N(6)-(1,2-dicarboxyethyl)-AMP + GDP + phosphate + 2 H(+). Its pathway is purine metabolism; AMP biosynthesis via de novo pathway; AMP from IMP: step 1/2. Its function is as follows. Plays an important role in the de novo pathway of purine nucleotide biosynthesis. Catalyzes the first committed step in the biosynthesis of AMP from IMP. This chain is Adenylosuccinate synthetase, found in Bifidobacterium adolescentis (strain ATCC 15703 / DSM 20083 / NCTC 11814 / E194a).